A 1838-amino-acid chain; its full sequence is Lysine-specific demethylase 5 (1838 aa).

The interval 1 to 150 is disordered; sequence MSAKTEADNT…SSNKFDQGKN (150 aa). Positions 15-31 are enriched in gly residues; the sequence is SGGGGVGSGTSSGGGAS. The span at 45 to 56 shows a compositional bias: low complexity; it reads RNSTGNGTNSGS. Polar residues predominate over residues 136–145; the sequence is HTQPHSSNKF. The JmjN domain maps to 161–202; it reads CPVFRPTTEEFKNPLAYISKIRSIAEKCGIAKILPPATWSPP. Residues 226–316 enclose the ARID domain; the sequence is TRVKLNFLDQ…ILHPFEVYTS (91 aa). The segment covering 321-333 has biased composition (low complexity); it reads GPTPTSSGSGSTP. 2 disordered regions span residues 321–380 and 416–437; these read GPTP…GLSG and GSPL…KGGE. A Phosphothreonine modification is found at T323. Composition is skewed to polar residues over residues 351 to 361, 369 to 380, and 416 to 430; these read TRQQIAPPNET, FGNSNASCGLSG, and GSPL…TRGA. The segment at 448-498 adopts a PHD-type 1 zinc-finger fold; that stretch reads KYICHICNRGDVEESMLLCDGCDDSYHTFCLLPPLTSIPKGEWLCPRCVVE. Residues 591–757 form the JmjC domain; sequence EYAESSWNLN…MGRECVNHYS (167 aa). Fe cation is bound by residues H637, D640, and H725. Positions 960-1049 form a coiled coil; it reads VRTRSDHNQE…LRIELQQLDL (90 aa). The PHD-type 2 zinc-finger motif lies at 1293–1354; that stretch reads DMFCLCKSEF…KWLCPSCVRS (62 aa). A disordered region spans residues 1401–1462; it reads SSPDVSAAQE…SDADDDDDED (62 aa). Positions 1407–1417 are enriched in low complexity; sequence AAQEAIMAQQQ. A phosphoserine mark is found at S1422 and S1433. The segment covering 1453-1462 has biased composition (acidic residues); that stretch reads SDADDDDDED. At S1474 the chain carries Phosphoserine. The tract at residues 1548–1751 is disordered; it reads YMQRQRQQHT…QRSQQAAQED (204 aa). Low complexity-rich tracts occupy residues 1576–1595, 1624–1650, 1658–1667, 1674–1683, and 1692–1736; these read NSPN…SNSG, GKKG…PGAD, ANGGNTNSST, SATTTPTPGS, and STTA…ATGG. 2 positions are modified to phosphoserine: S1635 and S1640. The PHD-type 3 zinc-finger motif lies at 1753–1808; the sequence is EEECRAENCHKPTGREVDWVQCDGGCNEWFHMYCVGLNRSQIKPDDDYICIRCTKT. Residues 1814–1838 are disordered; the sequence is QGSGHSMSVASTTTPGKQRAVQSAR.

This sequence belongs to the JARID1 histone demethylase family. As to quaternary structure, interacts with Myc. Part of a complex containing Lid, Myc and Ash2. The cofactor is Fe(2+).

The protein localises to the nucleus. The enzyme catalyses N(6),N(6),N(6)-trimethyl-L-lysyl(4)-[histone H3] + 3 2-oxoglutarate + 3 O2 = L-lysyl(4)-[histone H3] + 3 formaldehyde + 3 succinate + 3 CO2. Its activity is regulated as follows. Inhibited by Myc. Functionally, histone demethylase that specifically demethylates 'Lys-4' of histone H3, thereby playing a central role in histone code. Does not demethylate histone H3 'Lys-9', H3 'Lys-27', H3 'Lys-36', H3 'Lys-79' or H4 'Lys-20'. Specifically demethylates trimethylated H3 'Lys-4'. Required for the correct regulation of homeotic genes during development. Plays a role in the regulation of the circadian rhythm and in maintaining the normal periodicity of the circadian clock. Regulates the expression of clock-controlled genes including tim, per and cry. The sequence is that of Lysine-specific demethylase 5 from Drosophila melanogaster (Fruit fly).